A 109-amino-acid chain; its full sequence is Gliadoralin-A (109 aa).

Positions 1 to 16 (MLVILLMVVVLALSSA) are cleaved as a signal peptide. Q17 carries the post-translational modification Pyrrolidone carboxylic acid. The segment at 17 to 109 (QDPNRDFVVS…PRYQQPRRAV (93 aa)) is disordered. The segment covering 35–109 (PSSQQGTVGG…PRYQQPRRAV (75 aa)) has biased composition (low complexity). Positions 107–109 (RAV) are excised as a propeptide.

Predominantly proteolytically processed at its C-terminus before secretion to produce the major form gliadoralin A 1-90. Further proteloytically processed after secretion to produce minor forms. Potential substrate of transglutaminase. In terms of tissue distribution, found in saliva (at protein level). Secreted from the submandibular gland.

It localises to the secreted. Functionally, may play a role in the formation of the protective mucosal protein pellicle involved in the reinforcement and protection of oral mucosal epithelial surface. This Rattus norvegicus (Rat) protein is Gliadoralin-A.